Reading from the N-terminus, the 394-residue chain is uncharacterized protein (394 aa).

Helical transmembrane passes span 31–51 (LAILSLFLGIAACILIALSGL) and 57–77 (LIIALSLISIIVLSTGISLLI).

This sequence belongs to the chlamydial CPn_0129/CT_036/TC_0306 family.

Its subcellular location is the cell membrane. This is an uncharacterized protein from Chlamydia pneumoniae (Chlamydophila pneumoniae).